The sequence spans 408 residues: Protein SPATA31F3 (408 aa).

The helical transmembrane segment at 11–31 (VGYPFYTYGSIIIIALIIWQV) threads the bilayer. Residues 51 to 71 (QKVKQRAKEKTPRARRHSRKE) are disordered. S152 carries the phosphoserine modification. Disordered regions lie at residues 297 to 316 (TKTKKAEKSPPSTKRPMKGA) and 351 to 408 (LPLS…SASS). The span at 351–392 (LPLSSGSSKRSPLLTCATQPENPSHVSVSTSAEGTCLPQEST) shows a compositional bias: polar residues.

This sequence belongs to the SPATA31 family.

It is found in the membrane. This is Protein SPATA31F3 (SPATA31F3) from Bos taurus (Bovine).